The sequence spans 430 residues: CinA-like protein (430 aa).

Belongs to the CinA family.

The protein is CinA-like protein of Prochlorococcus marinus (strain NATL2A).